A 399-amino-acid polypeptide reads, in one-letter code: Coiled-coil domain-containing protein 85C-B (399 aa).

2 coiled-coil regions span residues 52–84 and 113–144; these read NRSL…ELCC and KEVS…DIIL. Residues 151-199 form a disordered region; the sequence is NGAGSRSSIDSQSSLSNLNGGSGTVRDVGDGSSTSSGGSAGSPDHHHNH. The segment covering 155-169 has biased composition (low complexity); that stretch reads SRSSIDSQSSLSNLN.

The protein belongs to the CCDC85 family.

It localises to the cell junction. Its subcellular location is the tight junction. The protein resides in the adherens junction. Its function is as follows. May play a role in cell-cell adhesion and epithelium development through its interaction with proteins of the beta-catenin family. May play an important role in cortical development, especially in the maintenance of radial glia. This is Coiled-coil domain-containing protein 85C-B (ccdc85cb) from Danio rerio (Zebrafish).